Consider the following 560-residue polypeptide: Membrane protein insertase YidC (560 aa).

Residues 7–27 (ILIVALAIVSYVMVLKWNQDY) traverse the membrane as a helical segment. The disordered stretch occupies residues 43–72 (APAIPDTPLGNNASASADVPSANGETSAPL). The next 4 helical transmembrane spans lie at 367 to 387 (IVGN…GIFF), 437 to 457 (LGGC…YWVL), 468 to 488 (FMLW…PIIM), and 515 to 535 (PIIF…YWVV).

It belongs to the OXA1/ALB3/YidC family. Type 1 subfamily. Interacts with the Sec translocase complex via SecD. Specifically interacts with transmembrane segments of nascent integral membrane proteins during membrane integration.

The protein resides in the cell inner membrane. Its function is as follows. Required for the insertion and/or proper folding and/or complex formation of integral membrane proteins into the membrane. Involved in integration of membrane proteins that insert both dependently and independently of the Sec translocase complex, as well as at least some lipoproteins. Aids folding of multispanning membrane proteins. In Pseudomonas fluorescens (strain SBW25), this protein is Membrane protein insertase YidC.